The chain runs to 245 residues: Adapter protein MecA (245 aa).

This sequence belongs to the MecA family. In terms of assembly, homodimer.

In terms of biological role, enables the recognition and targeting of unfolded and aggregated proteins to the ClpC protease or to other proteins involved in proteolysis. The chain is Adapter protein MecA from Streptococcus pneumoniae serotype 19F (strain G54).